Consider the following 306-residue polypeptide: Pyridoxal 5'-phosphate synthase subunit SNZERR (306 aa).

A D-ribose 5-phosphate-binding site is contributed by D34. The active-site Schiff-base intermediate with D-ribose 5-phosphate is K91. Residue G163 participates in D-ribose 5-phosphate binding. R175 contacts D-glyceraldehyde 3-phosphate. D-ribose 5-phosphate-binding positions include G224 and 245–246 (GS).

It belongs to the PdxS/SNZ family.

It carries out the reaction aldehydo-D-ribose 5-phosphate + D-glyceraldehyde 3-phosphate + L-glutamine = pyridoxal 5'-phosphate + L-glutamate + phosphate + 3 H2O + H(+). It functions in the pathway cofactor biosynthesis; pyridoxal 5'-phosphate biosynthesis. Catalyzes the formation of pyridoxal 5'-phosphate from ribose 5-phosphate (RBP), glyceraldehyde 3-phosphate (G3P) and ammonia. The ammonia is provided by PDX2. Can also use ribulose 5-phosphate and dihydroxyacetone phosphate as substrates, resulting from enzyme-catalyzed isomerization of RBP and G3P, respectively. Also plays an indirect role in resistance to singlet oxygen-generating photosensitizers. The protein is Pyridoxal 5'-phosphate synthase subunit SNZERR (SNZERR) of Suberites domuncula (Sponge).